Here is a 79-residue protein sequence, read N- to C-terminus: Sulfur carrier protein TusA (79 aa).

Cysteine 16 acts as the Cysteine persulfide intermediate in catalysis.

This sequence belongs to the sulfur carrier protein TusA family.

The protein localises to the cytoplasm. Sulfur carrier protein which probably makes part of a sulfur-relay system. The protein is Sulfur carrier protein TusA of Pseudomonas aeruginosa (strain LESB58).